Reading from the N-terminus, the 156-residue chain is Small ribosomal subunit protein uS7 (156 aa).

Belongs to the universal ribosomal protein uS7 family. Part of the 30S ribosomal subunit. Contacts proteins S9 and S11.

Functionally, one of the primary rRNA binding proteins, it binds directly to 16S rRNA where it nucleates assembly of the head domain of the 30S subunit. Is located at the subunit interface close to the decoding center, probably blocks exit of the E-site tRNA. The sequence is that of Small ribosomal subunit protein uS7 from Clostridium perfringens (strain ATCC 13124 / DSM 756 / JCM 1290 / NCIMB 6125 / NCTC 8237 / Type A).